The following is a 254-amino-acid chain: MRVLLSNDDGVHAPGLKALADAFEGDEVWVVAPDREQSASSHAISLHRPLRLFEMAPRWYAVDGTPTDAVYMGLNHVLRGARPDVVVSGINHGPNLGNDVLYSGTVAAAMEGALLGVHALAVSLACSPPHVFDEAARFAVALARRVVATQPPAPLLLNVNVPRGPVRGYRFTRLGRRTYGNEVVEKTDPRGRKYYWIGGEGGPTNEDIPGSDCNCVLGEGLVAVTPLHLDSSHDAVLQGLRSWTVPGYEKEPAL.

The a divalent metal cation site is built by D8, D9, S38, and N91.

This sequence belongs to the SurE nucleotidase family. Requires a divalent metal cation as cofactor.

The protein localises to the cytoplasm. It carries out the reaction a ribonucleoside 5'-phosphate + H2O = a ribonucleoside + phosphate. Its function is as follows. Nucleotidase that shows phosphatase activity on nucleoside 5'-monophosphates. The protein is 5'-nucleotidase SurE of Anaeromyxobacter sp. (strain Fw109-5).